A 211-amino-acid chain; its full sequence is Probable calcium-binding protein CML11 (211 aa).

Disordered stretches follow at residues 1–22 (MSEP…AAAT) and 40–60 (SCSA…LGDD). Positions 44 to 53 (QQQQQQQQQQ) are enriched in low complexity. 4 EF-hand domains span residues 60–95 (DQLG…LGLK), 96–131 (PSTD…ELLY), 136–171 (YSED…LGHA), and 172–207 (LTVK…AAFD). Residues Asp-73, Asn-75, Asp-77, Ser-79, Glu-84, Asp-109, Asn-111, Asn-113, Glu-120, Asp-149, Asp-151, Asn-153, Glu-160, Asp-185, Asp-187, Asp-189, Arg-191, and Glu-196 each contribute to the Ca(2+) site.

In terms of biological role, potential calcium sensor. The chain is Probable calcium-binding protein CML11 (CML11) from Oryza sativa subsp. japonica (Rice).